A 270-amino-acid chain; its full sequence is Fibroblast growth factor 5 (270 aa).

Positions 1–20 are cleaved as a signal peptide; that stretch reads MSLSLLLLLFLSHLILSAWA. Positions 26–84 are disordered; sequence LAPKGQPGPAATGRNPGGAGGSSTSGGTTSSSSSSVSSAPGASPGIRGSGSEQGSFQWS. A compositionally biased stretch (gly residues) spans 40 to 49; the sequence is NPGGAGGSST. A compositionally biased stretch (low complexity) spans 50–70; the sequence is SGGTTSSSSSSVSSAPGASPG. The span at 75–84 shows a compositional bias: polar residues; the sequence is GSEQGSFQWS. N112 carries N-linked (GlcNAc...) asparagine glycosylation. The segment at 237 to 257 is disordered; sequence EKKKPPSHVKPKVPLSAPRKS.

This sequence belongs to the heparin-binding growth factors family. As to quaternary structure, interacts with FGFR1 and FGFR2. Affinity between fibroblast growth factors (FGFs) and their receptors is increased by heparan sulfate glycosaminoglycans that function as coreceptors.

The protein localises to the secreted. Its function is as follows. Plays an important role in the regulation of cell proliferation and cell differentiation. Required for normal regulation of the hair growth cycle. Functions as an inhibitor of hair elongation by promoting progression from anagen, the growth phase of the hair follicle, into catagen the apoptosis-induced regression phase. In Canis lupus familiaris (Dog), this protein is Fibroblast growth factor 5 (FGF5).